Here is a 189-residue protein sequence, read N- to C-terminus: Large ribosomal subunit protein uL6 (189 aa).

It belongs to the universal ribosomal protein uL6 family. Part of the 50S ribosomal subunit.

In terms of biological role, this protein binds to the 23S rRNA, and is important in its secondary structure. It is located near the subunit interface in the base of the L7/L12 stalk, and near the tRNA binding site of the peptidyltransferase center. In Microcystis aeruginosa (strain NIES-843 / IAM M-2473), this protein is Large ribosomal subunit protein uL6.